Here is a 102-residue protein sequence, read N- to C-terminus: Small ribosomal subunit protein uS10 (102 aa).

The interval 33–59 is disordered; sequence RMSGPIPLPTKRIRITTRKSPDGEGSA.

Belongs to the universal ribosomal protein uS10 family. As to quaternary structure, part of the 30S ribosomal subunit.

Functionally, involved in the binding of tRNA to the ribosomes. This Pyrococcus furiosus (strain ATCC 43587 / DSM 3638 / JCM 8422 / Vc1) protein is Small ribosomal subunit protein uS10.